The following is a 571-amino-acid chain: MSFKMTQSQYTSLYGPTVGDSVRLGDTNLFAQVEKDYANYGDEATFGGGKSIRDGMAQNPNVTRDDKNVADLVLTNALIIDYDKIVKADIGIKNGYIFKIGKAGNPDIMDNVDIIIGATTDIIAAEGKIVTAGGIDTHVHFINPEQAEVALESGITTHIGGGTGASEGAKATTVTPGPWHIHRMLEAAEEMPINVGFTGKGQAVNHTALIEQIHAGAIGLKVHEDWGATPSALSHALDVADEFDVQVALHADTLNEAGFMEDTMAAVKDRVLHMYHTEGAGGGHAPDLIKSAAYSNILPSSTNPTLPYTHNTVDEHLDMVMITHHLNASIPEDIAFADSRIRKETIAAEDVLQDMGVFSMVSSDSQAMGRVGEVVTRTWQVAHRMKEQRGPLDGDFEYHDNNRIKRYIAKYTINPAITHGISDYVGSVEAGKLADLVMWEPEFFGAKPDLVVKGGMINSAVNGDANGSIPTSEPLKYRKMYGQFGGNITHTAMTFVSNTAYENGIYRQLNLKRMVRPVRNIRNLTKADMKNNNATPKIDVDPQTYEVFVDGNKITSEAATELPLTQRYFLF.

The Urease domain occupies 133–571 (GGIDTHVHFI…LPLTQRYFLF (439 aa)). His138, His140, and Lys221 together coordinate Ni(2+). Lys221 carries the N6-carboxylysine modification. His223 is a substrate binding site. The Ni(2+) site is built by His250 and His276. His324 acts as the Proton donor in catalysis. A Ni(2+)-binding site is contributed by Asp364.

The protein belongs to the metallo-dependent hydrolases superfamily. Urease alpha subunit family. As to quaternary structure, heterotrimer of UreA (gamma), UreB (beta) and UreC (alpha) subunits. Three heterotrimers associate to form the active enzyme. Requires Ni cation as cofactor. Post-translationally, carboxylation allows a single lysine to coordinate two nickel ions.

Its subcellular location is the cytoplasm. It carries out the reaction urea + 2 H2O + H(+) = hydrogencarbonate + 2 NH4(+). It functions in the pathway nitrogen metabolism; urea degradation; CO(2) and NH(3) from urea (urease route): step 1/1. The sequence is that of Urease subunit alpha from Staphylococcus epidermidis (strain ATCC 35984 / DSM 28319 / BCRC 17069 / CCUG 31568 / BM 3577 / RP62A).